The sequence spans 241 residues: Ribonuclease PH (241 aa).

Phosphate is bound by residues R89 and 127 to 129 (GTR).

Belongs to the RNase PH family. As to quaternary structure, homohexameric ring arranged as a trimer of dimers.

It carries out the reaction tRNA(n+1) + phosphate = tRNA(n) + a ribonucleoside 5'-diphosphate. Phosphorolytic 3'-5' exoribonuclease that plays an important role in tRNA 3'-end maturation. Removes nucleotide residues following the 3'-CCA terminus of tRNAs; can also add nucleotides to the ends of RNA molecules by using nucleoside diphosphates as substrates, but this may not be physiologically important. Probably plays a role in initiation of 16S rRNA degradation (leading to ribosome degradation) during starvation. The polypeptide is Ribonuclease PH (Xanthomonas oryzae pv. oryzae (strain MAFF 311018)).